Consider the following 151-residue polypeptide: MMALLHKEKLIECIENEVLSGGTVLLLVKNIVVSEISYMGDSYKYFTFNANHDLKSKEDLKGATSKNIAKMIYNWIIKNPQNNKIWSGEPRTQIYFENDLYHTNYNHECIKDFWNVSTSVGPCIFNDRSIWCTKCTSFYPFTNIMSPNIFQ.

The protein belongs to the asfivirus A151R family. As to quaternary structure, monomer. Homodimer. Interacts with protein B119L. Interacts with membrane protein E248R. It depends on Zn(2+) as a cofactor.

Its function is as follows. May participate in a redox cascade for the formation of disulfide bonds in viral proteins. This chain is Protein A151R, found in Ornithodoros (relapsing fever ticks).